Consider the following 258-residue polypeptide: Tryptophan synthase alpha chain (258 aa).

Residues Glu-52 and Asp-63 each act as proton acceptor in the active site.

The protein belongs to the TrpA family. In terms of assembly, tetramer of two alpha and two beta chains.

The catalysed reaction is (1S,2R)-1-C-(indol-3-yl)glycerol 3-phosphate + L-serine = D-glyceraldehyde 3-phosphate + L-tryptophan + H2O. Its pathway is amino-acid biosynthesis; L-tryptophan biosynthesis; L-tryptophan from chorismate: step 5/5. Its function is as follows. The alpha subunit is responsible for the aldol cleavage of indoleglycerol phosphate to indole and glyceraldehyde 3-phosphate. In Streptococcus pneumoniae serotype 2 (strain D39 / NCTC 7466), this protein is Tryptophan synthase alpha chain.